Consider the following 366-residue polypeptide: MKTRSKKTKTENNQEKSKEKNKFDQLPLDLEIEIFRRLPLKSVARFLTLSKSCAATIRSPSFITSFRSPQPCTLIASAPIFNCLHPFKPRVLVDHKLSFFSSSSSSSSSTSFLSRLTCPSSPYPRHMEYYCHYVNGLISVGYGREQIVTNPSTGRFITLPSVRTKRRLVKSFFGYDPASDQYKVLCMTERLYGHQEDPSSQHQVFTLGVKKPWKMLDRTTIPDHRPWTNGVCIDGVVYYIAKTGQGMSQLSLMRYDLRDDNLNVFISLPEEIRTPSLYSDTLLNYEGKLAIAIPVTSYIFDVWVMDQDGEKHEWLKKITFNIEPWQSSFDDIRIKGTTLTGEFIFAPMNNYCDDEFYVFHYKSQQE.

Positions 1-20 (MKTRSKKTKTENNQEKSKEK) are disordered. Residues 8 to 20 (TKTENNQEKSKEK) show a composition bias toward basic and acidic residues. The F-box domain occupies 20 to 66 (KNKFDQLPLDLEIEIFRRLPLKSVARFLTLSKSCAATIRSPSFITSF).

The protein is Putative F-box protein At1g26515 of Arabidopsis thaliana (Mouse-ear cress).